A 437-amino-acid chain; its full sequence is Magnetosome protein MamN (437 aa).

The next 11 membrane-spanning stretches (helical) occupy residues 26-46 (LAVL…GTYT), 53-73 (SIYF…ALLA), 95-115 (WILV…NSLI), 136-156 (VPVI…TMIG), 174-194 (FIGG…LFFE), 229-249 (YGLI…PLKV), 252-268 (GWIA…LGRF), 281-301 (DILF…VGIL), 320-340 (AILL…GTSA), 358-378 (AAWW…LSGA), and 416-436 (WGLP…AVLA).

The protein belongs to the arsenite-antimonite (ArsB) efflux (TC 2.A.45) family.

The protein resides in the magnetosome membrane. Functionally, plays a role in biomineralization; might regulate pH in the magnetosome. This chain is Magnetosome protein MamN, found in Magnetospirillum gryphiswaldense (strain DSM 6361 / JCM 21280 / NBRC 15271 / MSR-1).